A 941-amino-acid chain; its full sequence is Isoleucine--tRNA ligase (941 aa).

The 'HIGH' region signature appears at 58 to 68 (PYANGNIHIGH). L-isoleucyl-5'-AMP is bound at residue glutamate 564. Residues 605–609 (KMSKS) carry the 'KMSKS' region motif. Lysine 608 is a binding site for ATP. Zn(2+)-binding residues include cysteine 904, cysteine 907, cysteine 924, and cysteine 927.

The protein belongs to the class-I aminoacyl-tRNA synthetase family. IleS type 1 subfamily. In terms of assembly, monomer. Zn(2+) serves as cofactor.

Its subcellular location is the cytoplasm. It catalyses the reaction tRNA(Ile) + L-isoleucine + ATP = L-isoleucyl-tRNA(Ile) + AMP + diphosphate. Catalyzes the attachment of isoleucine to tRNA(Ile). As IleRS can inadvertently accommodate and process structurally similar amino acids such as valine, to avoid such errors it has two additional distinct tRNA(Ile)-dependent editing activities. One activity is designated as 'pretransfer' editing and involves the hydrolysis of activated Val-AMP. The other activity is designated 'posttransfer' editing and involves deacylation of mischarged Val-tRNA(Ile). The chain is Isoleucine--tRNA ligase from Buchnera aphidicola subsp. Cinara cedri (strain Cc).